A 237-amino-acid chain; its full sequence is Cysteine-rich venom protein DIS1 (237 aa).

Residues 1 to 18 (MFVFILLSLAAVLQQSFG) form the signal peptide. The SCP domain maps to 37–165 (VDKHNAFRRS…SYNYFYVCQY (129 aa)). Disulfide bonds link Cys-74–Cys-152, Cys-91–Cys-166, Cys-147–Cys-163, Cys-185–Cys-192, Cys-188–Cys-197, Cys-201–Cys-234, and Cys-219–Cys-232. The ShKT domain occupies 201 to 234 (CSREDVFMNCKSLVAQSNCQDDYIRKNCPATCFC).

This sequence belongs to the CRISP family. As to expression, expressed by the venom gland.

It localises to the secreted. Functionally, weakly blocks contraction of smooth muscle elicited by high potassium-induced depolarization, but does not block caffeine-stimulated contraction. May target voltage-gated calcium channels on smooth muscle. In Dispholidus typus (Boomslang), this protein is Cysteine-rich venom protein DIS1.